We begin with the raw amino-acid sequence, 1435 residues long: Nitric oxide synthase 1 (1435 aa).

Positions 1–206 (MEEHVFGVQQ…LQGSGDKNEL (206 aa)) are interaction with NOSIP. The PDZ domain maps to 17 to 99 (SVRLFKRKVG…ETHVVLILRG (83 aa)). Disordered stretches follow at residues 110–201 (TFTG…QGSG) and 277–304 (NNPYSEKEQPPASGKQSPTKNGSPSKCP). Positions 164–246 (QGHGQEAGSP…TGVQVDRDFD (83 aa)) are interaction with DYNLL1/PIN. The segment covering 290–300 (GKQSPTKNGSP) has biased composition (polar residues). Residue S340 participates in (6R)-L-erythro-5,6,7,8-tetrahydrobiopterin binding. C421 serves as a coordination point for heme b. Residues Q484, W593, Y594, and E598 each coordinate L-arginine. V683, W684, and F697 together coordinate (6R)-L-erythro-5,6,7,8-tetrahydrobiopterin. Y712 lines the heme b pocket. The interval 731 to 751 (KRRAIGFKKLAEAVKFSAKLM) is calmodulin-binding. The Flavodoxin-like domain maps to 761–941 (ATILYATETG…AFRTWAKKVF (181 aa)). The FMN site is built by T767, E768, T769, K771, S772, S813, T814, and G818. Phosphoserine is present on residues S853, S863, and S864. The FMN site is built by S892, H897, C899, E925, and Q929. Residues 996–1243 (KRVSAARLLS…VRGAPSFRLP (248 aa)) enclose the FAD-binding FR-type domain. R1016 contributes to the NADP(+) binding site. H1038, R1179, Y1180, Y1181, S1182, T1197, and A1199 together coordinate FAD. NADP(+) is bound at residue S1202. FAD is bound by residues Y1203, V1216, C1217, and S1218. 10 residues coordinate NADP(+): T1257, R1290, S1319, R1320, K1326, Y1328, Q1330, D1363, T1404, and R1406.

Belongs to the NOS family. Homodimer. Interacts with DLG4; the interaction possibly being prevented by the association between NOS1 and CAPON. Forms a ternary complex with CAPON and RASD1. Forms a ternary complex with CAPON and SYN1. Interacts with ZDHHC23. Interacts with NOSIP; which may impair its synaptic location. Interacts with HTR4. Interacts with SLC6A4. Interacts with VAC14. Interacts (via N-terminal domain) with DLG4 (via N-terminal tandem pair of PDZ domains). Interacts with SLC6A4. Forms a complex with ASL, ASS1 and SLC7A1; the complex regulates cell-autonomous L-arginine synthesis and citrulline recycling while channeling extracellular L-arginine to nitric oxide synthesis pathway. Interacts with DMD; localizes NOS1 to sarcolemma in muscle cells. Interacts with DYNLL1; inhibits the nitric oxide synthase activity. Heme b is required as a cofactor. FAD serves as cofactor. Requires FMN as cofactor. It depends on (6R)-L-erythro-5,6,7,8-tetrahydrobiopterin as a cofactor. In terms of processing, ubiquitinated; mediated by STUB1/CHIP in the presence of Hsp70 and Hsp40 (in vitro).

It is found in the cell membrane. The protein resides in the sarcolemma. The protein localises to the cell projection. It localises to the dendritic spine. It catalyses the reaction 2 L-arginine + 3 NADPH + 4 O2 + H(+) = 2 L-citrulline + 2 nitric oxide + 3 NADP(+) + 4 H2O. Its activity is regulated as follows. Stimulated by calcium/calmodulin. Inhibited by DYNLL1 that prevents the dimerization of the protein. Inhibited by NOSIP. Its function is as follows. Produces nitric oxide (NO) which is a messenger molecule with diverse functions throughout the body. In the brain and peripheral nervous system, NO displays many properties of a neurotransmitter. Probably has nitrosylase activity and mediates cysteine S-nitrosylation of cytoplasmic target proteins such SRR. The protein is Nitric oxide synthase 1 (NOS1) of Oryctolagus cuniculus (Rabbit).